The following is a 67-amino-acid chain: Small ribosomal subunit protein bS21 (67 aa).

It belongs to the bacterial ribosomal protein bS21 family.

This chain is Small ribosomal subunit protein bS21, found in Acidiphilium cryptum (strain JF-5).